The sequence spans 92 residues: Large ribosomal subunit protein eL31 (92 aa).

Belongs to the eukaryotic ribosomal protein eL31 family.

This Halobacterium salinarum (strain ATCC 29341 / DSM 671 / R1) protein is Large ribosomal subunit protein eL31.